We begin with the raw amino-acid sequence, 223 residues long: Deoxyribose-phosphate aldolase (223 aa).

The active-site Proton donor/acceptor is the D92. Residue K153 is the Schiff-base intermediate with acetaldehyde of the active site. Residue K182 is the Proton donor/acceptor of the active site.

This sequence belongs to the DeoC/FbaB aldolase family. DeoC type 1 subfamily.

The protein resides in the cytoplasm. The catalysed reaction is 2-deoxy-D-ribose 5-phosphate = D-glyceraldehyde 3-phosphate + acetaldehyde. It functions in the pathway carbohydrate degradation; 2-deoxy-D-ribose 1-phosphate degradation; D-glyceraldehyde 3-phosphate and acetaldehyde from 2-deoxy-alpha-D-ribose 1-phosphate: step 2/2. Catalyzes a reversible aldol reaction between acetaldehyde and D-glyceraldehyde 3-phosphate to generate 2-deoxy-D-ribose 5-phosphate. In Mycoplasmoides gallisepticum (strain R(low / passage 15 / clone 2)) (Mycoplasma gallisepticum), this protein is Deoxyribose-phosphate aldolase.